A 446-amino-acid chain; its full sequence is Methionine aminopeptidase 2-3 (446 aa).

The disordered stretch occupies residues isoleucine 14–glutamate 116. Residues alanine 61–proline 76 show a composition bias toward basic residues. The segment covering proline 86–tyrosine 96 has biased composition (polar residues). Positions lysine 98–glutamate 116 are enriched in basic and acidic residues. Residue histidine 199 coordinates substrate. Aspartate 219, aspartate 230, and histidine 299 together coordinate a divalent metal cation. Histidine 307 is a binding site for substrate. A divalent metal cation is bound by residues glutamate 332 and glutamate 427.

Belongs to the peptidase M24A family. Methionine aminopeptidase eukaryotic type 2 subfamily. Requires Co(2+) as cofactor. The cofactor is Zn(2+). Mn(2+) serves as cofactor. Fe(2+) is required as a cofactor.

The protein localises to the cytoplasm. The enzyme catalyses Release of N-terminal amino acids, preferentially methionine, from peptides and arylamides.. Functionally, cotranslationally removes the N-terminal methionine from nascent proteins. The N-terminal methionine is often cleaved when the second residue in the primary sequence is small and uncharged (Met-Ala-, Cys, Gly, Pro, Ser, Thr, or Val). The chain is Methionine aminopeptidase 2-3 from Aspergillus fumigatus (strain CBS 144.89 / FGSC A1163 / CEA10) (Neosartorya fumigata).